Reading from the N-terminus, the 221-residue chain is MNEDPQKKDEPFFKDVEFKASYGEANQIPSQGIPQIAFAGRSNAGKSSLLNAILERKSLAKVSSTPGKTKLLNFFFVNRSIYLVDLPGFGYSANSHKDHEAMMDLLMDYLNLAKDLKCLFLVCDSQRELPEEELELIGTCFERNIKPVLVRTKIDKLNQSDLSKLRKKMKNIHELYPMLETVLVSNKSGKGLPELRKIVDSLITTVGTLVEGNTKKIEGIS.

In terms of domain architecture, EngB-type G spans 32–205 (GIPQIAFAGR…RKIVDSLITT (174 aa)). GTP is bound by residues 40–47 (GRSNAGKS), 67–71 (GKTKL), 85–88 (DLPG), 152–155 (TKID), and 184–186 (VSN). S47 and T69 together coordinate Mg(2+).

The protein belongs to the TRAFAC class TrmE-Era-EngA-EngB-Septin-like GTPase superfamily. EngB GTPase family. Requires Mg(2+) as cofactor.

Necessary for normal cell division and for the maintenance of normal septation. The polypeptide is Probable GTP-binding protein EngB (Leptospira borgpetersenii serovar Hardjo-bovis (strain JB197)).